The primary structure comprises 323 residues: tRNA U34 carboxymethyltransferase (323 aa).

Carboxy-S-adenosyl-L-methionine is bound by residues Lys91, Trp105, Lys110, Gly130, 181-182 (IE), Met196, Tyr200, and Arg315.

The protein belongs to the class I-like SAM-binding methyltransferase superfamily. CmoB family. In terms of assembly, homotetramer.

The catalysed reaction is carboxy-S-adenosyl-L-methionine + 5-hydroxyuridine(34) in tRNA = 5-carboxymethoxyuridine(34) in tRNA + S-adenosyl-L-homocysteine + H(+). In terms of biological role, catalyzes carboxymethyl transfer from carboxy-S-adenosyl-L-methionine (Cx-SAM) to 5-hydroxyuridine (ho5U) to form 5-carboxymethoxyuridine (cmo5U) at position 34 in tRNAs. The chain is tRNA U34 carboxymethyltransferase from Enterobacter sp. (strain 638).